We begin with the raw amino-acid sequence, 354 residues long: NADH-quinone oxidoreductase subunit H (354 aa).

A run of 8 helical transmembrane segments spans residues 25-45 (LVRI…LILW), 91-111 (WLYL…WAVI), 126-146 (LLYA…AGWA), 170-190 (MGFA…SEIV), 205-225 (FLSW…ISGI), 253-273 (MAFA…SALA), 290-310 (FIPG…VFIW), and 330-350 (VFLP…MSPL).

The protein belongs to the complex I subunit 1 family. As to quaternary structure, NDH-1 is composed of 14 different subunits. Subunits NuoA, H, J, K, L, M, N constitute the membrane sector of the complex.

It localises to the cell inner membrane. The enzyme catalyses a quinone + NADH + 5 H(+)(in) = a quinol + NAD(+) + 4 H(+)(out). Functionally, NDH-1 shuttles electrons from NADH, via FMN and iron-sulfur (Fe-S) centers, to quinones in the respiratory chain. The immediate electron acceptor for the enzyme in this species is believed to be ubiquinone. Couples the redox reaction to proton translocation (for every two electrons transferred, four hydrogen ions are translocated across the cytoplasmic membrane), and thus conserves the redox energy in a proton gradient. This subunit may bind ubiquinone. This chain is NADH-quinone oxidoreductase subunit H, found in Burkholderia mallei (strain ATCC 23344).